The following is an 806-amino-acid chain: Ent-atiserene synthase KSL4, chloroplastic (806 aa).

The transit peptide at 1–75 (MGIVALILIK…AKLFKKNEVC (75 aa)) directs the protein to the chloroplast. The interval 33–56 (ASLAGSGLPKTTPPKTASLQSHSP) is disordered. Polar residues predominate over residues 45–55 (PPKTASLQSHS). Asp556, Asp560, Asn700, and Glu708 together coordinate Mg(2+). Residues 556 to 560 (DDLFD) carry the DDXXD motif motif.

This sequence belongs to the terpene synthase family. Requires Mg(2+) as cofactor. As to expression, highly expressed in leaves, and, at low levels, in roots, stems and flowers.

Its subcellular location is the plastid. The protein resides in the chloroplast. It catalyses the reaction ent-copalyl diphosphate = ent-atiserene + diphosphate. Its pathway is secondary metabolite biosynthesis; terpenoid biosynthesis. In terms of biological role, involved in the biosynthesis of ent-kaurene diterpenoids natural products such as oridonin, miltiradiene, eriocalyxin B and nezukol, known to exhibit antitumor, anti-inflammatory and antibacterial activities. Catalyzes the conversion of ent-copalyl diphosphate (ent-CPP) to ent-atiserene. The chain is Ent-atiserene synthase KSL4, chloroplastic from Isodon rubescens (Rabdosia rubescens).